The sequence spans 430 residues: 5-methylthioadenosine/S-adenosylhomocysteine deaminase (430 aa).

Zn(2+)-binding residues include histidine 63 and histidine 65. Substrate contacts are provided by glutamate 92, arginine 144, and histidine 182. A Zn(2+)-binding site is contributed by histidine 209. 2 residues coordinate substrate: glutamate 212 and aspartate 297. Position 297 (aspartate 297) interacts with Zn(2+).

It belongs to the metallo-dependent hydrolases superfamily. MTA/SAH deaminase family. Zn(2+) is required as a cofactor.

It carries out the reaction S-adenosyl-L-homocysteine + H2O + H(+) = S-inosyl-L-homocysteine + NH4(+). The catalysed reaction is S-methyl-5'-thioadenosine + H2O + H(+) = S-methyl-5'-thioinosine + NH4(+). Its function is as follows. Catalyzes the deamination of 5-methylthioadenosine and S-adenosyl-L-homocysteine into 5-methylthioinosine and S-inosyl-L-homocysteine, respectively. Is also able to deaminate adenosine. The protein is 5-methylthioadenosine/S-adenosylhomocysteine deaminase of Desulforudis audaxviator (strain MP104C).